A 376-amino-acid polypeptide reads, in one-letter code: Cytochrome-c peroxidase IdrP1 (376 aa).

The signal sequence occupies residues 1–24 (MGHIRSIRLALAVAAVCTAASAAA). Cytochrome c domains follow at residues 49-157 (DKVA…AAFK) and 203-354 (AEAQ…EALS). Positions 71, 74, 75, 218, 221, and 222 each coordinate heme c.

The iodate reductase (Idr) complex is composed of a molybdopterin-dependent iodate reductase (IdrA and IdrB subunits) and two associated peroxidases (IdrP1 and IdrP2). The cofactor is heme c.

The protein resides in the periplasm. It catalyses the reaction 2 Fe(II)-[cytochrome c] + H2O2 + 2 H(+) = 2 Fe(III)-[cytochrome c] + 2 H2O. Involved in iodate respiration. May play a critical role in detoxification of inadvertent H(2)O(2) generated by the iodate reductase IdrA/IdrB. This Denitromonas iodatirespirans protein is Cytochrome-c peroxidase IdrP1.